The chain runs to 230 residues: Large ribosomal subunit protein uL1 (230 aa).

The protein belongs to the universal ribosomal protein uL1 family. As to quaternary structure, part of the 50S ribosomal subunit.

Its function is as follows. Binds directly to 23S rRNA. The L1 stalk is quite mobile in the ribosome, and is involved in E site tRNA release. In terms of biological role, protein L1 is also a translational repressor protein, it controls the translation of the L11 operon by binding to its mRNA. The protein is Large ribosomal subunit protein uL1 of Aster yellows witches'-broom phytoplasma (strain AYWB).